A 438-amino-acid chain; its full sequence is Thymidine phosphorylase (438 aa).

Belongs to the thymidine/pyrimidine-nucleoside phosphorylase family. As to quaternary structure, homodimer.

It catalyses the reaction thymidine + phosphate = 2-deoxy-alpha-D-ribose 1-phosphate + thymine. Its pathway is pyrimidine metabolism; dTMP biosynthesis via salvage pathway; dTMP from thymine: step 1/2. Functionally, the enzymes which catalyze the reversible phosphorolysis of pyrimidine nucleosides are involved in the degradation of these compounds and in their utilization as carbon and energy sources, or in the rescue of pyrimidine bases for nucleotide synthesis. The sequence is that of Thymidine phosphorylase from Sinorhizobium medicae (strain WSM419) (Ensifer medicae).